We begin with the raw amino-acid sequence, 244 residues long: MSFMSRVLLGVNIDHIATLRQARGTRYPEPVQAALVAEQAGADGITVHLREDRRHINDRDVELLAQTLQTRMNLEMAATEEMVVIACRIQPPHCCLVPEKREELTTEGGLDVVGNKAWIAQCCQRLGQAGIEVSLFIDAEESQILAARECGAPAIEIHTGGYADAQTIDQQQQELARIRSAVAFALAQGLIVNAGHGLHYHNTLAIAEIPGINELNIGHSIIARAAITGLDEAVRSMRSLLDTV.

Residue asparagine 12 participates in 3-amino-2-oxopropyl phosphate binding. A 1-deoxy-D-xylulose 5-phosphate-binding site is contributed by 14-15; it reads DH. Residue arginine 23 coordinates 3-amino-2-oxopropyl phosphate. Histidine 48 (proton acceptor) is an active-site residue. The 1-deoxy-D-xylulose 5-phosphate site is built by arginine 50 and histidine 55. Glutamate 75 acts as the Proton acceptor in catalysis. Threonine 105 is a 1-deoxy-D-xylulose 5-phosphate binding site. Catalysis depends on histidine 196, which acts as the Proton donor. Residues glycine 197 and 218-219 contribute to the 3-amino-2-oxopropyl phosphate site; that span reads GH.

Belongs to the PNP synthase family. Homooctamer; tetramer of dimers.

The protein resides in the cytoplasm. The catalysed reaction is 3-amino-2-oxopropyl phosphate + 1-deoxy-D-xylulose 5-phosphate = pyridoxine 5'-phosphate + phosphate + 2 H2O + H(+). It participates in cofactor biosynthesis; pyridoxine 5'-phosphate biosynthesis; pyridoxine 5'-phosphate from D-erythrose 4-phosphate: step 5/5. Catalyzes the complicated ring closure reaction between the two acyclic compounds 1-deoxy-D-xylulose-5-phosphate (DXP) and 3-amino-2-oxopropyl phosphate (1-amino-acetone-3-phosphate or AAP) to form pyridoxine 5'-phosphate (PNP) and inorganic phosphate. The sequence is that of Pyridoxine 5'-phosphate synthase from Alcanivorax borkumensis (strain ATCC 700651 / DSM 11573 / NCIMB 13689 / SK2).